The sequence spans 344 residues: Dihydroorotase (344 aa).

Residues His-14 and His-16 each contribute to the Zn(2+) site. Substrate-binding positions include 16-18 (HLR) and Asn-42. Zn(2+)-binding residues include Lys-99, His-136, and His-174. N6-carboxylysine is present on Lys-99. His-136 contacts substrate. Leu-219 is a substrate binding site. Residue Asp-247 participates in Zn(2+) binding. Residue Asp-247 is part of the active site. Positions 251 and 263 each coordinate substrate.

Belongs to the metallo-dependent hydrolases superfamily. DHOase family. Class II DHOase subfamily. As to quaternary structure, homodimer. Zn(2+) serves as cofactor.

The enzyme catalyses (S)-dihydroorotate + H2O = N-carbamoyl-L-aspartate + H(+). The protein operates within pyrimidine metabolism; UMP biosynthesis via de novo pathway; (S)-dihydroorotate from bicarbonate: step 3/3. In terms of biological role, catalyzes the reversible cyclization of carbamoyl aspartate to dihydroorotate. In Teredinibacter turnerae (strain ATCC 39867 / T7901), this protein is Dihydroorotase.